The following is a 500-amino-acid chain: Probable transcription factor FPSE_09189 (500 aa).

Disordered regions lie at residues 161 to 197 (MVRH…PSLA) and 457 to 500 (IRTG…TQLE). Over residues 459–474 (TGHEDSSRDGGRENKA) the composition is skewed to basic and acidic residues. Polar residues predominate over residues 475–484 (MNRNRSTGNS).

The protein resides in the nucleus. Its function is as follows. The two putative transcription factors FPSE_09188 and FPSE_09189 could be responsible for orchestrating expression of the W493 A and B biosynthesis cluster genes. W493 A and B consist of six amino acid residues D-allo-thr, L-Ala, D-Ala, L-Gln, D-Tyr, and L-Val/L-Ile linked to a 3-hydroxy-4-methyltetradecanoic acid polyketide chain. The chain is Probable transcription factor FPSE_09189 from Fusarium pseudograminearum (strain CS3096) (Wheat and barley crown-rot fungus).